The chain runs to 600 residues: Transcription factor rlmA (600 aa).

Residues 1–61 (MGRRKIEIKA…KKLYEFSSCD (61 aa)) enclose the MADS-box domain. Disordered regions lie at residues 71–518 (YYGP…NIET) and 544–600 (GFGR…KSKT). Positions 75 to 89 (PHEHKGPEDFNGKRD) are enriched in basic and acidic residues. A compositionally biased stretch (polar residues) spans 151 to 160 (PQPQGASRPS). Residues 222–242 (QPLPPHAIPPHPMPQPVPPHH) are compositionally biased toward pro residues. Over residues 243 to 260 (QAPQHLPQHPHPLAQQTP) the composition is skewed to low complexity. Positions 328–339 (HQRSLSSKSRSI) are enriched in polar residues. Residues 364-384 (PRTESADVKAEAKQNDSKEIK) are compositionally biased toward basic and acidic residues. Residues 386–397 (PAQPVAPPPPPR) are compositionally biased toward pro residues. The segment covering 440–452 (RGSATADSSSSTG) has biased composition (low complexity). The span at 453–468 (NQTVTPAKANPDTNHS) shows a compositional bias: polar residues. A compositionally biased stretch (pro residues) spans 490-501 (PPNPFARPPPPG). Residues 503 to 515 (ASQNSNAYNSNNN) show a composition bias toward low complexity.

The protein belongs to the MEF2 family. Interacts with hsp90. In terms of processing, phosphorylation during asexual development.

It localises to the nucleus. Functionally, transcription factor; part of cell wall integrity (CWI) signaling pathway composed of pkcA, the bck1-mkk2-mpka MAPK cascade and the downstream rlmA transcription regulator. The CWI signaling pathway regulates cell wall integrity and pyomelanin formation. CWI also controls oxidative stress response, gliotoxin production, iron adaptation and asexual development. Finally, CWI is constitutively required for A.fumigatus to cope with the temperature increase found in the mammalian lung environment, during infection. Positively regulates the phosphorylation of mpkA. Involved in tolerance to oxidative damage and transcriptional regulation of genes related to oxidative stress adaptation. Directly regulates the expression of regulators of conidiation, including flbB, flbC, brlA, abaA, and rasB, as well as genes involved in cell wall synthesis and remodeling. Specifically associates with the target fumiquinazoline (fmq) cluster genes promoters at conserved motifs (5'-TAWWWWTA-3') during conidiation to supplement mature conidia with fumiquinazoline C. Also controls the DHN-melanin production via binding the promoter of pksP. The polypeptide is Transcription factor rlmA (Aspergillus fumigatus (strain ATCC MYA-4609 / CBS 101355 / FGSC A1100 / Af293) (Neosartorya fumigata)).